The following is a 980-amino-acid chain: Peroxisomal ATPase PEX6 (980 aa).

Residue Arg-119 is modified to Omega-N-methylarginine. ATP is bound by residues 470–477 and 744–751; these read GPPGCGKT and GPPGTGKT.

Belongs to the AAA ATPase family. In terms of assembly, interacts with PEX1; forming the PEX1-PEX6 AAA ATPase complex, which is composed of a heterohexamer formed by a trimer of PEX1-PEX6 dimers. Interacts with PEX26; interaction is direct and promotes recruitment to peroxisomal membranes. Interacts with ZFAND6. Expressed in the retina, at higher levels in the photoreceptor layer at the joint between the outer and inner segments.

Its subcellular location is the cytoplasm. The protein localises to the cytosol. It localises to the peroxisome membrane. The protein resides in the cell projection. It is found in the cilium. Its subcellular location is the photoreceptor outer segment. The catalysed reaction is ATP + H2O = ADP + phosphate + H(+). In terms of biological role, component of the PEX1-PEX6 AAA ATPase complex, a protein dislocase complex that mediates the ATP-dependent extraction of the PEX5 receptor from peroxisomal membranes, an essential step for PEX5 recycling. Specifically recognizes PEX5 monoubiquitinated at 'Cys-11', and pulls it out of the peroxisome lumen through the PEX2-PEX10-PEX12 retrotranslocation channel. Extraction by the PEX1-PEX6 AAA ATPase complex is accompanied by unfolding of the TPR repeats and release of bound cargo from PEX5. The chain is Peroxisomal ATPase PEX6 from Homo sapiens (Human).